A 142-amino-acid chain; its full sequence is Class II hydrophobin 7 (142 aa).

A signal peptide spans methionine 1–alanine 16. 4 cysteine pairs are disulfide-bonded: cysteine 73–cysteine 123, cysteine 84–cysteine 114, cysteine 85–cysteine 97, and cysteine 124–cysteine 135.

Belongs to the cerato-ulmin hydrophobin family. As to quaternary structure, homodimer. Homodimers further self-assemble to form highly ordered films at water-air interfaces through intermolecular interactions.

It localises to the secreted. The protein resides in the cell wall. Its function is as follows. Aerial growth, conidiation, and dispersal of filamentous fungi in the environment rely upon a capability of their secreting small amphipathic proteins called hydrophobins (HPBs) with low sequence identity. Class I can self-assemble into an outermost layer of rodlet bundles on aerial cell surfaces, conferring cellular hydrophobicity that supports fungal growth, development and dispersal; whereas Class II form highly ordered films at water-air interfaces through intermolecular interactions but contribute nothing to the rodlet structure. The sequence is that of Class II hydrophobin 7 from Trichoderma asperellum (strain ATCC 204424 / CBS 433.97 / NBRC 101777).